Reading from the N-terminus, the 549-residue chain is Pleckstrin homology domain-containing family A member 8 (549 aa).

Residues 1-93 (MEGVLYKWTN…WLVALGTAKA (93 aa)) enclose the PH domain. Disordered stretches follow at residues 180-245 (NPDL…ENIS) and 257-312 (QNDL…QEVQ). Basic and acidic residues predominate over residues 203-219 (KSNDPKNLHPGETRKDL). Acidic residues predominate over residues 276–288 (EPVEEQQTDGSTE). A compositionally biased stretch (polar residues) spans 299-309 (EVSMSPTQNKQ).

Its subcellular location is the cytoplasm. It is found in the golgi apparatus. It localises to the trans-Golgi network membrane. The protein localises to the membrane. Cargo transport protein that is required for apical transport from the trans-Golgi network (TGN) to the plasma membrane. The chain is Pleckstrin homology domain-containing family A member 8 (plekha8) from Danio rerio (Zebrafish).